We begin with the raw amino-acid sequence, 157 residues long: 2-C-methyl-D-erythritol 2,4-cyclodiphosphate synthase (157 aa).

D8 and H10 together coordinate a divalent metal cation. Residues D8–H10 and H34–S35 contribute to the 4-CDP-2-C-methyl-D-erythritol 2-phosphate site. H42 is an a divalent metal cation binding site. Residues D56–G58, F61–D65, T132–E135, F139, and R142 contribute to the 4-CDP-2-C-methyl-D-erythritol 2-phosphate site.

It belongs to the IspF family. In terms of assembly, homotrimer. Requires a divalent metal cation as cofactor.

The enzyme catalyses 4-CDP-2-C-methyl-D-erythritol 2-phosphate = 2-C-methyl-D-erythritol 2,4-cyclic diphosphate + CMP. Its pathway is isoprenoid biosynthesis; isopentenyl diphosphate biosynthesis via DXP pathway; isopentenyl diphosphate from 1-deoxy-D-xylulose 5-phosphate: step 4/6. Functionally, involved in the biosynthesis of isopentenyl diphosphate (IPP) and dimethylallyl diphosphate (DMAPP), two major building blocks of isoprenoid compounds. Catalyzes the conversion of 4-diphosphocytidyl-2-C-methyl-D-erythritol 2-phosphate (CDP-ME2P) to 2-C-methyl-D-erythritol 2,4-cyclodiphosphate (ME-CPP) with a corresponding release of cytidine 5-monophosphate (CMP). The polypeptide is 2-C-methyl-D-erythritol 2,4-cyclodiphosphate synthase (Geobacter metallireducens (strain ATCC 53774 / DSM 7210 / GS-15)).